A 121-amino-acid chain; its full sequence is Basic phospholipase A2 homolog piratoxin-2 (121 aa).

7 disulfides stabilise this stretch: cysteine 26–cysteine 115, cysteine 28–cysteine 44, cysteine 43–cysteine 95, cysteine 49–cysteine 121, cysteine 50–cysteine 88, cysteine 57–cysteine 81, and cysteine 75–cysteine 86. Positions 105-117 are important for membrane-damaging activities in eukaryotes and bacteria; heparin-binding; the sequence is KKYRYHLKPFCKK.

Belongs to the phospholipase A2 family. Group II subfamily. K49 sub-subfamily. In terms of assembly, homodimer; non-covalently linked. As to expression, expressed by the venom gland.

Its subcellular location is the secreted. Its function is as follows. Snake venom phospholipase A2 (PLA2) homolog that lacks enzymatic activity. Shows myotoxic activity and edema-inducing activities in vivo. A model of myotoxic mechanism has been proposed: an apo Lys49-PLA2 is activated by the entrance of a hydrophobic molecule (e.g. fatty acid) at the hydrophobic channel of the protein leading to a reorientation of a monomer. This reorientation causes a transition between 'inactive' to 'active' states, causing alignment of C-terminal and membrane-docking sites (MDoS) side-by-side and putting the membrane-disruption sites (MDiS) in the same plane, exposed to solvent and in a symmetric position for both monomers. The MDoS region stabilizes the toxin on membrane by the interaction of charged residues with phospholipid head groups. Subsequently, the MDiS region destabilizes the membrane with penetration of hydrophobic residues. This insertion causes a disorganization of the membrane, allowing an uncontrolled influx of ions (i.e. calcium and sodium), and eventually triggering irreversible intracellular alterations and cell death. In Bothrops pirajai (Piraja's lancehead), this protein is Basic phospholipase A2 homolog piratoxin-2.